The sequence spans 179 residues: Natural killer cells antigen CD94 (179 aa).

At 1–10 (MAVSRITRWR) the chain is on the cytoplasmic side. A helical; Signal-anchor for type II membrane protein membrane pass occupies residues 11-31 (LMSVIFGIKCLFLMVTLGVLL). The Extracellular portion of the chain corresponds to 32-179 (INSFTIQNIQ…NRYICKKLPI (148 aa)). 4 disulfide bridges follow: Cys-58–Cys-70, Cys-61–Cys-72, Cys-89–Cys-174, and Cys-152–Cys-166. In terms of domain architecture, C-type lectin spans 68-175 (HQCNCYFISK…CENKNRYICK (108 aa)). 2 N-linked (GlcNAc...) asparagine glycosylation sites follow: Asn-93 and Asn-109.

Can form disulfide-bonded heterodimer with NKG2 family members KLRC1 and KLRC2. KLRD1-KLRC1 heterodimer interacts with peptide-bound MHC-E-B2M heterotrimeric complex. KLRD1 plays a prominent role in directly interacting with MHC-E. KLRD1-KLRC1 interacts with much higher affinity with peptide-bound MHC-E-B2M than KLRD1-KLRC2. Interacts with the adapter protein TYROBP/DAP12; this interaction is required for cell surface expression and cell activation.

It localises to the cell membrane. Its function is as follows. Immune receptor involved in self-nonself discrimination. In complex with KLRC1 or KLRC2 on cytotoxic and regulatory lymphocyte subsets, recognizes non-classical major histocompatibility (MHC) class Ib molecule MHC-E loaded with self-peptides derived from the signal sequence of classical MHC class Ia and non-classical MHC class Ib molecules. Enables cytotoxic cells to monitor the expression of MHC class I molecules in healthy cells and to tolerate self. Primarily functions as a ligand binding subunit as it lacks the capacity to signal. KLRD1-KLRC1 acts as an immune inhibitory receptor. Key inhibitory receptor on natural killer (NK) cells that regulates their activation and effector functions. Dominantly counteracts T cell receptor signaling on a subset of memory/effector CD8-positive T cells as part of an antigen-driven response to avoid autoimmunity. On intraepithelial CD8-positive gamma-delta regulatory T cells triggers TGFB1 secretion, which in turn limits the cytotoxic programming of intraepithelial CD8-positive alpha-beta T cells, distinguishing harmless from pathogenic antigens. In MHC-E-rich tumor microenvironment, acts as an immune inhibitory checkpoint and may contribute to progressive loss of effector functions of NK cells and tumor-specific T cells, a state known as cell exhaustion. Upon MHC-E-peptide binding, transmits intracellular signals through KLRC1 immunoreceptor tyrosine-based inhibition motifs (ITIMs) by recruiting INPP5D/SHIP-1 and INPPL1/SHIP-2 tyrosine phosphatases to ITIMs, and ultimately opposing signals transmitted by activating receptors through dephosphorylation of proximal signaling molecules. In terms of biological role, KLRD1-KLRC2 acts as an immune activating receptor. On cytotoxic lymphocyte subsets recognizes MHC-E loaded with signal sequence-derived peptides from non-classical MHC class Ib MHC-G molecules, likely playing a role in the generation and effector functions of adaptive NK cells and in maternal-fetal tolerance during pregnancy. Regulates the effector functions of terminally differentiated cytotoxic lymphocyte subsets, and in particular may play a role in adaptive NK cell response to viral infection. Upon MHC-E-peptide binding, transmits intracellular signals via the adapter protein TYROBP/DAP12, triggering the phosphorylation of proximal signaling molecules and cell activation. The polypeptide is Natural killer cells antigen CD94 (Klrd1) (Mus musculus (Mouse)).